A 448-amino-acid polypeptide reads, in one-letter code: uncharacterized protein (448 aa).

An ATP-binding site is contributed by 257 to 264 (GRNAQGKT).

This is an uncharacterized protein from Methanocaldococcus jannaschii (strain ATCC 43067 / DSM 2661 / JAL-1 / JCM 10045 / NBRC 100440) (Methanococcus jannaschii).